A 242-amino-acid chain; its full sequence is Ubiquinone biosynthesis O-methyltransferase (242 aa).

Positions 44, 64, 85, and 129 each coordinate S-adenosyl-L-methionine.

Belongs to the methyltransferase superfamily. UbiG/COQ3 family.

The catalysed reaction is a 3-demethylubiquinol + S-adenosyl-L-methionine = a ubiquinol + S-adenosyl-L-homocysteine + H(+). The enzyme catalyses a 3-(all-trans-polyprenyl)benzene-1,2-diol + S-adenosyl-L-methionine = a 2-methoxy-6-(all-trans-polyprenyl)phenol + S-adenosyl-L-homocysteine + H(+). Its pathway is cofactor biosynthesis; ubiquinone biosynthesis. Functionally, O-methyltransferase that catalyzes the 2 O-methylation steps in the ubiquinone biosynthetic pathway. The polypeptide is Ubiquinone biosynthesis O-methyltransferase (Salmonella typhi).